A 97-amino-acid polypeptide reads, in one-letter code: Ribosomal biogenesis factor (97 aa).

The residue at position 19 (S19) is a Phosphoserine. K21 is modified (N6-acetyllysine). The residue at position 69 (S69) is a Phosphoserine.

Associates with the pre-60S ribosomal particles.

It localises to the nucleus. It is found in the nucleolus. Its function is as follows. Trans-acting factor in ribosome biogenesis required for efficient 40S and 60S subunit production. This chain is Ribosomal biogenesis factor (Rbis), found in Mus musculus (Mouse).